Consider the following 212-residue polypeptide: Probable chemoreceptor glutamine deamidase CheD (212 aa).

This sequence belongs to the CheD family.

The enzyme catalyses L-glutaminyl-[protein] + H2O = L-glutamyl-[protein] + NH4(+). Probably deamidates glutamine residues to glutamate on methyl-accepting chemotaxis receptors (MCPs), playing an important role in chemotaxis. The chain is Probable chemoreceptor glutamine deamidase CheD from Bordetella parapertussis (strain 12822 / ATCC BAA-587 / NCTC 13253).